Reading from the N-terminus, the 340-residue chain is Fructose-1,6-bisphosphatase class 1 (340 aa).

Positions 107, 126, 128, and 129 each coordinate Mg(2+). Asn-215 is a binding site for substrate. Residue Glu-287 participates in Mg(2+) binding.

Belongs to the FBPase class 1 family. Homotetramer. It depends on Mg(2+) as a cofactor.

It localises to the cytoplasm. The enzyme catalyses beta-D-fructose 1,6-bisphosphate + H2O = beta-D-fructose 6-phosphate + phosphate. It functions in the pathway carbohydrate biosynthesis; gluconeogenesis. This chain is Fructose-1,6-bisphosphatase class 1, found in Brucella suis biovar 1 (strain 1330).